A 559-amino-acid chain; its full sequence is Tissue-type plasminogen activator (559 aa).

Positions 1-17 (MKGELLCVLLLCGVAFT) are cleaved as a signal peptide. The propeptide occupies 18–29 (LPDQGIHRRFRR). A propeptide spans 30-32 (GAR) (removed by plasmin). Positions 36-78 (ATCRDEQTQTTYQQHQSWLRPMLRGNRVEYCRCNSGLAQCHSV) constitute a Fibronectin type-I domain. Cystine bridges form between C38–C68, C66–C75, C83–C94, C88–C105, C107–C116, C124–C205, C145–C187, C176–C200, C213–C294, C234–C276, C265–C289, C297–C428, C340–C356, C348–C417, C442–C516, C474–C490, and C506–C534. Residues 39–49 (RDEQTQTTYQQ) are important for binding to annexin A2. The region spanning 79–117 (PVRSCSEPRCFNGGTCQQALYFSDFVCQCPDGFVGKRCD) is the EGF-like domain. Kringle domains are found at residues 124-205 (CFEG…TPAC) and 213-294 (CYVG…MSPC). N-linked (GlcNAc...) asparagine glycosylation occurs at N149. Residues 309–558 (IKGGLFTDIT…YLNWIQDNMK (250 aa)) form the Peptidase S1 domain. Residues H355 and D404 each act as charge relay system in the active site. Residue N481 is glycosylated (N-linked (GlcNAc...) asparagine). S510 serves as the catalytic Charge relay system.

It belongs to the peptidase S1 family. As to quaternary structure, heterodimer of chain A and chain B held by a disulfide bond. Binds to fibrin with high affinity. This interaction leads to an increase in the catalytic efficiency of the enzyme due to an increase in affinity for plasminogen. Similarly, binding to heparin increases the activation of plasminogen. Binds to annexin A2, cytokeratin-8, fibronectin and laminin. Binds to mannose receptor and the low-density lipoprotein receptor-related protein (LRP1); these proteins are involved in TPA clearance. Binds LRP1B; binding is followed by internalization and degradation. Forms heterodimer with SERPINA5. Interacts with SERPINE1. In complex with SERPINE1, interacts with SORL1. In terms of processing, the single chain, almost fully active enzyme, can be further processed into a two-chain fully active form by a cleavage after Arg-308 catalyzed by plasmin, tissue kallikrein or factor Xa.

The protein resides in the secreted. It localises to the extracellular space. It catalyses the reaction Specific cleavage of Arg-|-Val bond in plasminogen to form plasmin.. Its activity is regulated as follows. Inhibited by SERPINA5. Inhibited by SERPINE1. Functionally, converts the abundant, but inactive, zymogen plasminogen to plasmin by hydrolyzing a single Arg-Val bond in plasminogen. By controlling plasmin-mediated proteolysis, it plays an important role in tissue remodeling and degradation, in cell migration and many other physiopathological events. During oocyte activation, plays a role in cortical granule reaction in the zona reaction, which contributes to the block to polyspermy. The sequence is that of Tissue-type plasminogen activator (Plat) from Rattus norvegicus (Rat).